Reading from the N-terminus, the 432-residue chain is Homogentisate 1,2-dioxygenase (432 aa).

Histidine 286 serves as the catalytic Proton acceptor. Fe cation contacts are provided by histidine 329 and glutamate 335. Residues tyrosine 344 and histidine 365 each coordinate homogentisate. Histidine 365 contacts Fe cation.

This sequence belongs to the homogentisate dioxygenase family. Hexamer; dimer of trimers. Fe cation is required as a cofactor.

It catalyses the reaction homogentisate + O2 = 4-maleylacetoacetate + H(+). It functions in the pathway amino-acid degradation; L-phenylalanine degradation; acetoacetate and fumarate from L-phenylalanine: step 4/6. Its function is as follows. Involved in the catabolism of homogentisate (2,5-dihydroxyphenylacetate or 2,5-OH-PhAc), a central intermediate in the degradation of phenylalanine and tyrosine. Catalyzes the oxidative ring cleavage of the aromatic ring of homogentisate to yield maleylacetoacetate. The protein is Homogentisate 1,2-dioxygenase of Bordetella pertussis (strain Tohama I / ATCC BAA-589 / NCTC 13251).